The chain runs to 245 residues: Biosynthetic peptidoglycan transglycosylase (245 aa).

Residues 29–49 (LLVAFLILSLVLVATVSVINP) traverse the membrane as a helical segment.

The protein belongs to the glycosyltransferase 51 family.

Its subcellular location is the cell inner membrane. It carries out the reaction [GlcNAc-(1-&gt;4)-Mur2Ac(oyl-L-Ala-gamma-D-Glu-L-Lys-D-Ala-D-Ala)](n)-di-trans,octa-cis-undecaprenyl diphosphate + beta-D-GlcNAc-(1-&gt;4)-Mur2Ac(oyl-L-Ala-gamma-D-Glu-L-Lys-D-Ala-D-Ala)-di-trans,octa-cis-undecaprenyl diphosphate = [GlcNAc-(1-&gt;4)-Mur2Ac(oyl-L-Ala-gamma-D-Glu-L-Lys-D-Ala-D-Ala)](n+1)-di-trans,octa-cis-undecaprenyl diphosphate + di-trans,octa-cis-undecaprenyl diphosphate + H(+). The protein operates within cell wall biogenesis; peptidoglycan biosynthesis. Functionally, peptidoglycan polymerase that catalyzes glycan chain elongation from lipid-linked precursors. The sequence is that of Biosynthetic peptidoglycan transglycosylase from Shewanella amazonensis (strain ATCC BAA-1098 / SB2B).